Reading from the N-terminus, the 104-residue chain is uncharacterized protein (104 aa).

This is an uncharacterized protein from Escherichia coli (strain K12).